The primary structure comprises 745 residues: Class E vacuolar protein-sorting machinery protein hse1 (745 aa).

Residues 17–146 (ATDENLTSED…RLKQSNPTLQ (130 aa)) enclose the VHS domain. The segment at 142–237 (NPTLQPPSAP…PQPVPSSTTA (96 aa)) is disordered. In terms of domain architecture, UIM spans 163-182 (KEEEELQMALQLSLQEEERK). Low complexity predominate over residues 186–214 (AGASGATASSSSGGAAAGPSNAGGAVASG). Positions 238 to 297 (ATVSRVRALYDFVPSEPGELEFKKGDVIAVLKSVYKDWWSGSLKGKTGIFPLNYVEKLAD) constitute an SH3 domain. A disordered region spans residues 390 to 745 (SSMSHPPGPT…GLADYYRSAY (356 aa)). The span at 425-446 (QQQEPPRFYNPAPAQDAPQYPA) shows a compositional bias: low complexity. Composition is skewed to polar residues over residues 518–532 (LNTT…QYTP) and 540–576 (GANN…TNPL). Residues 577–590 (SNPSYNAPSAPSYS) are compositionally biased toward low complexity. Pro residues predominate over residues 618–635 (APPPPSGPAPSGPAPSAP). Residues 636–647 (SAPSAPSAPGAP) are compositionally biased toward low complexity. Residues 648–660 (NSYTQGAYHSQNP) show a composition bias toward polar residues. Composition is skewed to low complexity over residues 662-672 (AAAAAAAAAAA) and 719-733 (SAPG…APGQ).

The protein belongs to the STAM family. As to quaternary structure, component of the ESCRT-0 complex composed of hse1 and vps27.

It is found in the endosome membrane. Component of the ESCRT-0 complex which is the sorting receptor for ubiquitinated cargo proteins at the multivesicular body (MVB). The protein is Class E vacuolar protein-sorting machinery protein hse1 (hse1) of Neurospora crassa (strain ATCC 24698 / 74-OR23-1A / CBS 708.71 / DSM 1257 / FGSC 987).